Consider the following 2203-residue polypeptide: Voltage-dependent L-type calcium channel subunit alpha-1D (2203 aa).

Disordered regions lie at residues 1–51 (MMMM…QTVL) and 64–100 (KAAQ…SSNS). Over 1–126 (MMMMMMMKKM…RACISIVDWK (126 aa)) the chain is Cytoplasmic. The segment covering 38 to 51 (GPTSQPNSSKQTVL) has biased composition (polar residues). The segment covering 82–93 (QRKRQQYAKSKK) has biased composition (basic residues). An I repeat occupies 112-408 (NNPIRRACIS…NLVLGVLSGE (297 aa)). A helical transmembrane segment spans residues 127–145 (PFDIFILLAIFANCVALAI). Residues 146–163 (YIPFPEDDSNSTNHNLEK) lie on the Extracellular side of the membrane. The N-linked (GlcNAc...) asparagine glycan is linked to Asn155. The chain crosses the membrane as a helical span at residues 164-183 (VEYAFLIIFTVETFLKIIAS). The Cytoplasmic segment spans residues 184 to 195 (GLLLHPNASVRN). Residues 196 to 214 (GWNLLDFVIVIVGLFSVIL) form a helical membrane-spanning segment. The Extracellular portion of the chain corresponds to 215–235 (EQLTKETEGGNHSSGKSGGFD). An N-linked (GlcNAc...) asparagine glycan is attached at Asn225. The chain crosses the membrane as a helical span at residues 236–254 (VKALRAFRVLRPLRLVSGV). The Cytoplasmic segment spans residues 255–273 (PSLQVVLNSIIKAMVPLLH). The chain crosses the membrane as a helical span at residues 274-293 (IALLVLFVIIIYAIIGLELF). At 294–381 (IGKMHKTCFF…WVNDAIGWEW (88 aa)) the chain is on the extracellular side. N-linked (GlcNAc...) asparagine glycosylation occurs at Asn329. Glu364 provides a ligand contact to Ca(2+). Residues 382–406 (PWVYFVSLIILGSFFVLNLVLGVLS) traverse the membrane as a helical segment. The Cytoplasmic portion of the chain corresponds to 407–582 (GEFSKEREKA…RRCRAAVKSV (176 aa)). The segment at 429-446 (QQLEEDLKGYLDWITQAE) is binding to the beta subunit. The tract at residues 449 to 480 (DPENEEEGGEEGKRNTSMPTSETESVNTENVS) is disordered. The segment covering 463–479 (NTSMPTSETESVNTENV) has biased composition (polar residues). An II repeat occupies 528 to 774 (EALCVCRCSL…DWNAVMYDGI (247 aa)). A helical membrane pass occupies residues 583–602 (TFYWLVIVLVFLNTLTISSE). The Extracellular segment spans residues 603–617 (HYNQPDWLTQIQDIA). A helical membrane pass occupies residues 618–636 (NKVLLALFTCEMLVKMYSL). The Cytoplasmic segment spans residues 637 to 644 (GLQAYFVS). The chain crosses the membrane as a helical span at residues 645–663 (LFNRFDCFVVCGGITETIL). Residues 664 to 673 (VELELMSPLG) lie on the Extracellular side of the membrane. A helical membrane pass occupies residues 674 to 692 (VSVFRCVRLLRIFKVTRHW). Residues 693-711 (TSLSNLVASLLNSMKSIAS) lie on the Cytoplasmic side of the membrane. Residues 712–732 (LLLLLFLFIIIFSLLGMQLFG) traverse the membrane as a helical segment. Residues 733–786 (GKFNFDETQTKRSTFDNFPQALLTVFQILTGEDWNAVMYDGIMAYGGPSSSGMI) are Extracellular-facing. Glu764 provides a ligand contact to Ca(2+). A helical membrane pass occupies residues 787-811 (VCIYFIILFICGNYILLKLFLAIAV). Residues 812 to 945 (DNLADAESLN…VGCHKLINHH (134 aa)) are Cytoplasmic-facing. The interval 822-909 (TAQKEEAEEK…AGPRPRRISE (88 aa)) is disordered. Basic and acidic residues predominate over residues 824–849 (QKEEAEEKERKKIARKESLENKKNNK). Polar residues predominate over residues 850–861 (PEVNQIANSDNK). The span at 884–897 (VGEEEEEEEEDEPE) shows a compositional bias: acidic residues. One copy of the III repeat lies at 892–1174 (EEDEPEVPAG…LLYKAIDSNG (283 aa)). The chain crosses the membrane as a helical span at residues 946 to 964 (IFTNLILVFIMLSSAALAA). Residues 965–980 (EDPIRSHSFRNTILGY) are Extracellular-facing. The helical transmembrane segment at 981–1000 (FDYAFTAIFTVEILLKMTTF) threads the bilayer. Topologically, residues 1001–1012 (GAFLHKGAFCRN) are cytoplasmic. The helical transmembrane segment at 1013-1031 (YFNLLDMLVVGVSLVSFGI) threads the bilayer. At 1032-1037 (QSSAIS) the chain is on the extracellular side. The chain crosses the membrane as a helical span at residues 1038-1057 (VVKILRVLRVLRPLRAINRA). Over 1058-1076 (KGLKHVVQCVFVAIRTIGN) the chain is Cytoplasmic. Residues 1077–1096 (IMIVTTLLQFMFACIGVQLF) form a helical membrane-spanning segment. Residues 1097-1186 (KGKFYRCTDE…VGPVYNYRVE (90 aa)) are Extracellular-facing. Residues 1134 to 1224 (RIWQNSDFNF…QEQGEKEYKN (91 aa)) form a dihydropyridine binding region. Glu1160 serves as a coordination point for Ca(2+). A helical membrane pass occupies residues 1187–1207 (ISIFFIIYIIIVAFFMMNIFV). Over 1208–1264 (GFVIVTFQEQGEKEYKNCELDKNQRQCVEYALKARPLRRYIPKNPYQYKFWYVVNSS) the chain is Cytoplasmic. Residues 1211–1486 (IVTFQEQGEK…YTCGSNFAIV (276 aa)) form an IV repeat. The chain crosses the membrane as a helical span at residues 1265-1283 (PFEYMMFVLIMLNTLCLAM). The Extracellular portion of the chain corresponds to 1284-1298 (QHYEQSKMFNDAMDI). Residues 1299–1318 (LNMVFTGVFTVEMVLKVIAF) traverse the membrane as a helical segment. The Cytoplasmic portion of the chain corresponds to 1319–1325 (KPKGYFS). The chain crosses the membrane as a helical span at residues 1326 to 1347 (DAWNTFDSLIVIGSIIDVALSE). Over 1348 to 1357 (ADNSEESNRI) the chain is Extracellular. Residues 1358 to 1377 (SITFFRLFRVMRLVKLLSRG) traverse the membrane as a helical segment. Topologically, residues 1378–1396 (EGIRTLLWTFIKSFQALPY) are cytoplasmic. The chain crosses the membrane as a helical span at residues 1397 to 1416 (VALLIAMLFFIYAVIGMQMF). The Extracellular portion of the chain corresponds to 1417–1483 (GKVAMRDNNQ…GEEYTCGSNF (67 aa)). A dihydropyridine binding region spans residues 1464-1530 (LCDPDSDYNP…LGPHHLDEFK (67 aa)). Residues 1476–1519 (EYTCGSNFAIVYFISFYMLCAFLIINLFVAVIMDNFDYLTRDWS) are phenylalkylamine binding. Residues 1484 to 1508 (AIVYFISFYMLCAFLIINLFVAVIM) traverse the membrane as a helical segment. Topologically, residues 1509–2203 (DNFDYLTRDW…ADEMICITTL (695 aa)) are cytoplasmic. Disordered regions lie at residues 1734-1766 (NHVN…PASD), 1795-1816 (TSTN…KRPS), 1920-1963 (FERP…HRRS), and 2176-2195 (GPGY…DLAD). The segment covering 1795–1806 (TSTNANLNNANM) has biased composition (polar residues). Over residues 2180–2195 (SDEEPDPGREEEDLAD) the composition is skewed to acidic residues.

The protein belongs to the calcium channel alpha-1 subunit (TC 1.A.1.11) family. CACNA1D subfamily. Voltage-dependent calcium channels are multisubunit complexes, consisting of alpha-1, alpha-2, beta and delta subunits in a 1:1:1:1 ratio. The channel activity is directed by the pore-forming and voltage-sensitive alpha-1 subunit. In many cases, this subunit is sufficient to generate voltage-sensitive calcium channel activity. The auxiliary subunits beta and alpha-2/delta linked by a disulfide bridge regulate the channel activity. Interacts with CABP1 and CABP4, resulting in a near elimination of calcium-dependent inactivation of the channel. Interacts with RIMBP2. Expressed in brain, pancreatic islets and B-lymphocytes.

It is found in the membrane. The catalysed reaction is Ca(2+)(in) = Ca(2+)(out). In terms of biological role, voltage-sensitive calcium channels (VSCC) mediate the entry of calcium ions into excitable cells and are also involved in a variety of calcium-dependent processes, including muscle contraction, hormone or neurotransmitter release, gene expression, cell motility, cell division and cell death. The isoform alpha-1D gives rise to L-type calcium currents. Long-lasting (L-type) calcium channels belong to the 'high-voltage activated' (HVA) group. They are blocked by dihydropyridines (DHP), phenylalkylamines, and by benzothiazepines. Its function is as follows. Voltage-sensitive calcium channels (VSCC) mediate the entry of calcium ions into excitable cells and are also involved in a variety of calcium-dependent processes, including muscle contraction, hormone or neurotransmitter release, gene expression, cell motility, cell division and cell death. The isoform alpha-1D gives rise to L-type calcium currents. The chain is Voltage-dependent L-type calcium channel subunit alpha-1D (Cacna1d) from Rattus norvegicus (Rat).